The sequence spans 1026 residues: mRNA transport homolog 4 (1026 aa).

One can recognise a Helicase ATP-binding domain in the interval I134–V290. Residue A147 to T154 coordinates ATP. A DEIH box motif is present at residues D238–H241. In terms of domain architecture, Helicase C-terminal spans N360–E564.

It belongs to the helicase family. SKI2 subfamily.

The protein resides in the nucleus. The polypeptide is mRNA transport homolog 4 (mtr-4) (Caenorhabditis elegans).